A 302-amino-acid polypeptide reads, in one-letter code: Sulfate adenylyltransferase subunit 2 (302 aa).

This sequence belongs to the PAPS reductase family. CysD subfamily. As to quaternary structure, heterodimer composed of CysD, the smaller subunit, and CysN.

The catalysed reaction is sulfate + ATP + H(+) = adenosine 5'-phosphosulfate + diphosphate. The protein operates within sulfur metabolism; hydrogen sulfide biosynthesis; sulfite from sulfate: step 1/3. Functionally, with CysN forms the ATP sulfurylase (ATPS) that catalyzes the adenylation of sulfate producing adenosine 5'-phosphosulfate (APS) and diphosphate, the first enzymatic step in sulfur assimilation pathway. APS synthesis involves the formation of a high-energy phosphoric-sulfuric acid anhydride bond driven by GTP hydrolysis by CysN coupled to ATP hydrolysis by CysD. The protein is Sulfate adenylyltransferase subunit 2 of Escherichia coli O157:H7 (strain EC4115 / EHEC).